We begin with the raw amino-acid sequence, 299 residues long: Prohibitin-2 (299 aa).

Position 2 is an N-acetylalanine (Ala2). Residues 19–49 form a necessary for transcriptional repression region; the sequence is MGTALKLLLGAGAVAYGVRESVFTVEGGHRA. Residue Tyr128 is modified to Phosphotyrosine. Lys147 carries the post-translational modification N6-acetyllysine. Residues 150–174 are necessary for transcriptional repression; sequence ASQLITQRAQVSLLIRRELTERAKD. At Ser151 the chain carries Phosphoserine. Positions 190–238 form a coiled coil; it reads SREYTAAVEAKQVAQQEAQRAQFLVEKAKQEQRQKIVQAEGEAEAAKML. An N6-acetyllysine mark is found at Lys200, Lys236, Lys250, and Lys262.

The protein belongs to the prohibitin family. As to quaternary structure, the mitochondrial prohibitin complex consists of two subunits (PHB1 and PHB2), assembled into a membrane-associated ring-shaped supercomplex of approximately 1 mDa. Interacts with ESR1, HDAC1 and HDAC5. Interacts with ZNF703. Interacts with STOML2. Interacts with ARFGEF3. Interacts with SPHK2. Interacts with COX4I1; the interaction associates PHB2 with COX. Interacts with MAP1LC3B (membrane-bound form LC3-II); the interaction is direct and upon mitochondrial depolarization and proteasome-dependent outer membrane rupture. Interacts with IGFBP6 (via C-terminal domain). Interacts with CLPB. Interacts with CD86 (via cytoplasmic domain); the interactions increases after priming with CD40. Interacts with AFG3L2. Interacts with DNAJC19. Interacts with AKT2; this interaction may be important for myogenic differentiation. In terms of processing, phosphorylated. Tyrosine phosphorylation is indirectly stimulated by IGFBP6. In terms of tissue distribution, widely expressed in different tissues.

It is found in the mitochondrion inner membrane. Its subcellular location is the cytoplasm. The protein localises to the nucleus. It localises to the cell membrane. Functionally, protein with pleiotropic attributes mediated in a cell-compartment- and tissue-specific manner, which include the plasma membrane-associated cell signaling functions, mitochondrial chaperone, and transcriptional co-regulator of transcription factors and sex steroid hormones in the nucleus. Its function is as follows. In the mitochondria, together with PHB, forms large ring complexes (prohibitin complexes) in the inner mitochondrial membrane (IMM) and functions as a chaperone protein that stabilizes mitochondrial respiratory enzymes and maintains mitochondrial integrity in the IMM, which is required for mitochondrial morphogenesis, neuronal survival, and normal lifespan. The prohibitin complex, with DNAJC19, regulates cardiolipin remodeling and the protein turnover of OMA1 in a cardiolipin-binding manner. Also regulates cytochrome-c oxidase assembly (COX) and mitochondrial respiration. Binding to sphingoid 1-phosphate (SPP) modulates its regulator activity. Has a key role of mitophagy receptor involved in targeting mitochondria for autophagic degradation. Involved in mitochondrial-mediated antiviral innate immunity, activates RIG-I-mediated signal transduction and production of IFNB1 and pro-inflammatory cytokine IL6. In the nucleus, serves as transcriptional co-regulator. Acts as a mediator of transcriptional repression by nuclear hormone receptors via recruitment of histone deacetylases. Functions as an estrogen receptor (ER)-selective coregulator that potentiates the inhibitory activities of antiestrogens and represses the activity of estrogens. Competes with NCOA1 for modulation of ER transcriptional activity. In terms of biological role, in the plasma membrane, is involved in IGFBP6-induced cell migration. Cooperates with CD86 to mediate CD86-signaling in B lymphocytes that regulates the level of IgG1 produced through the activation of distal signaling intermediates. Upon CD40 engagement, required to activate NF-kappa-B signaling pathway via phospholipase C and protein kinase C activation. The chain is Prohibitin-2 from Mus musculus (Mouse).